The primary structure comprises 217 residues: Nucleoside diphosphate-linked moiety X motif 6 (217 aa).

In terms of domain architecture, Nudix hydrolase spans 42 to 177; that stretch reads THQVGVAGAV…VAKLLLYGYN (136 aa). The Nudix box signature appears at 77–98; that stretch reads GLSDQGEDIGATAVREVLEETG.

It belongs to the Nudix hydrolase family. As to expression, detected in liver (at protein level).

The protein resides in the cytoplasm. It localises to the nucleus. It is found in the mitochondrion. May contribute to the regulation of cell proliferation. The chain is Nucleoside diphosphate-linked moiety X motif 6 (nudt6) from Xenopus laevis (African clawed frog).